The primary structure comprises 119 residues: Flagellar transcriptional regulator FlhD (119 aa).

Belongs to the FlhD family. As to quaternary structure, homodimer; disulfide-linked. Forms a heterohexamer composed of two FlhC and four FlhD subunits. Each FlhC binds a FlhD dimer, forming a heterotrimer, and a hexamer assembles by dimerization of two heterotrimers.

Its subcellular location is the cytoplasm. Functionally, functions in complex with FlhC as a master transcriptional regulator that regulates transcription of several flagellar and non-flagellar operons by binding to their promoter region. Activates expression of class 2 flagellar genes, including fliA, which is a flagellum-specific sigma factor that turns on the class 3 genes. Also regulates genes whose products function in a variety of physiological pathways. The chain is Flagellar transcriptional regulator FlhD from Cronobacter sakazakii (strain ATCC BAA-894) (Enterobacter sakazakii).